The following is a 400-amino-acid chain: Lysophospholipid transporter LplT (400 aa).

Helical transmembrane passes span 19–39, 53–73, 91–111, 139–159, 164–184, 195–213, 227–247, 257–277, 281–301, 304–324, 352–372, and 373–393; these read VIVA…ATLA, VLQM…GQIA, AGAA…LVGI, LMEA…GVLA, IAAL…NLFI, SWRL…VVLW, LFWG…PVAL, YLNA…AKLV, TVSR…IFSL, ALLP…FFVV, NSAM…GVPA, and VAIG…LWIW.

The protein belongs to the major facilitator superfamily. LplT (TC 2.A.1.42) family.

The protein localises to the cell inner membrane. In terms of biological role, catalyzes the facilitated diffusion of 2-acyl-glycero-3-phosphoethanolamine (2-acyl-GPE) into the cell. This chain is Lysophospholipid transporter LplT, found in Salmonella newport (strain SL254).